Reading from the N-terminus, the 420-residue chain is MHVLSVSEINAQIKALLEATFLQVRVQGEVSNLTIHKVSGHAYFSLKDSQSVIRCVLFKGNANRLKFALKEGQEMVVFGGISVYAPRGDYQINCFEIEPKEIGSLTLALEQLKEKLRLKGYFDEANKLPKPNFPKRVAVITSQNSAAWADMKKIASKRWPMCELVCINTLMQGEGCVQSVVESIAYADSFYDTKNAFDAIVVARGGGSMEDLYSFNDEKIADALYLAKTFSMSAIGHESDFLLSDSVADLRASTPSNAMEILLPSSDEWLQRLDGFNVKLHRSFKTLLHQKKAHLEHLAASLKRLSFENKHHLNALKLEKLTIALDNKTLEFLRLKKTLLEKISTQLSTSPFLQTKTERLNRLENALKLAYANLKLPQFGALVSKNHQAIELEALKRGDKIELSNEKARASAEILSVDRV.

It belongs to the XseA family. As to quaternary structure, heterooligomer composed of large and small subunits.

It is found in the cytoplasm. It carries out the reaction Exonucleolytic cleavage in either 5'- to 3'- or 3'- to 5'-direction to yield nucleoside 5'-phosphates.. Bidirectionally degrades single-stranded DNA into large acid-insoluble oligonucleotides, which are then degraded further into small acid-soluble oligonucleotides. This Helicobacter pylori (strain J99 / ATCC 700824) (Campylobacter pylori J99) protein is Exodeoxyribonuclease 7 large subunit.